Here is a 238-residue protein sequence, read N- to C-terminus: MAEIPIDFPPLKIQEKIATILDTFTELRARKKQYAFYRDYLLNQENIRKIYGANIPFETFQVKDICEIRRGRAITKAYIRNNPGENPVYSAATTNDGELGHIKDCDFDGEYITWTTNGYAGVVFYRNGKFNASQDCGVLKVKNKKICTKFLSLLLEIEATKFVHNLASRPKLSQKVMAEIELSFPPLEIQEKIADILCAFEKLCNDLVEGIPAEIELRKKQLDYYQNFLFNWVQKIRN.

The protein belongs to the type-I restriction system S methylase family. As to quaternary structure, the methyltransferase is composed of M and S polypeptides.

Its function is as follows. The specificity (S) subunit of a type I methyltransferase (MTase); this subunit dictates DNA sequence specificity. The single R subunit has multiple frameshifts and is probably not expressed. The chain is Putative type I specificity subunit S.MpnORF201P from Mycoplasma pneumoniae (strain ATCC 29342 / M129 / Subtype 1) (Mycoplasmoides pneumoniae).